The chain runs to 230 residues: Orotidine 5'-phosphate decarboxylase (230 aa).

Substrate is bound by residues Asp10, Lys31, 58-67 (DLKLHDIPNT), Thr117, Arg179, Gln188, Gly208, and Arg209. Lys60 serves as the catalytic Proton donor.

It belongs to the OMP decarboxylase family. Type 1 subfamily. As to quaternary structure, homodimer.

The catalysed reaction is orotidine 5'-phosphate + H(+) = UMP + CO2. It participates in pyrimidine metabolism; UMP biosynthesis via de novo pathway; UMP from orotate: step 2/2. In terms of biological role, catalyzes the decarboxylation of orotidine 5'-monophosphate (OMP) to uridine 5'-monophosphate (UMP). The chain is Orotidine 5'-phosphate decarboxylase from Staphylococcus aureus (strain USA300).